Reading from the N-terminus, the 374-residue chain is UPF0754 membrane protein SAS1767 (374 aa).

The next 2 membrane-spanning stretches (helical) occupy residues 4 to 24 and 354 to 374; these read LFII…TNVI and SLGF…AIFV.

Belongs to the UPF0754 family.

It localises to the cell membrane. The polypeptide is UPF0754 membrane protein SAS1767 (Staphylococcus aureus (strain MSSA476)).